Reading from the N-terminus, the 352-residue chain is Photosystem II D2 protein (352 aa).

The residue at position 2 (Thr2) is an N-acetylthreonine. A Phosphothreonine modification is found at Thr2. The helical transmembrane segment at 40 to 60 threads the bilayer; it reads CAYMALGGWLTGTTFVTSWYT. Residue His117 coordinates chlorophyll a. Residues 124–140 form a helical membrane-spanning segment; sequence GFMLRQFEIAQSLKLRP. The pheophytin a site is built by Gln129 and Asn142. Residues 152–165 traverse the membrane as a helical segment; it reads VFVSVFLIYPLGQA. A chlorophyll a-binding site is contributed by His197. Residues 207 to 227 traverse the membrane as a helical segment; the sequence is AALLCAIHGATVENTLFEDGD. A plastoquinone contacts are provided by His214 and Phe261. His214 provides a ligand contact to Fe cation. His268 contacts Fe cation. A helical transmembrane segment spans residues 278–294; it reads GLWMSAIGVVGLALNLR.

Belongs to the reaction center PufL/M/PsbA/D family. As to quaternary structure, PSII is composed of 1 copy each of membrane proteins PsbA, PsbB, PsbC, PsbD, PsbE, PsbF, PsbH, PsbI, PsbJ, PsbK, PsbL, PsbM, PsbT, PsbX, PsbY, PsbZ, Psb30/Ycf12, at least 3 peripheral proteins of the oxygen-evolving complex and a large number of cofactors. It forms dimeric complexes. The D1/D2 heterodimer binds P680, chlorophylls that are the primary electron donor of PSII, and subsequent electron acceptors. It shares a non-heme iron and each subunit binds pheophytin, quinone, additional chlorophylls, carotenoids and lipids. There is also a Cl(-1) ion associated with D1 and D2, which is required for oxygen evolution. The PSII complex binds additional chlorophylls, carotenoids and specific lipids. serves as cofactor.

The protein localises to the plastid. It localises to the chloroplast thylakoid membrane. The enzyme catalyses 2 a plastoquinone + 4 hnu + 2 H2O = 2 a plastoquinol + O2. In terms of biological role, photosystem II (PSII) is a light-driven water:plastoquinone oxidoreductase that uses light energy to abstract electrons from H(2)O, generating O(2) and a proton gradient subsequently used for ATP formation. It consists of a core antenna complex that captures photons, and an electron transfer chain that converts photonic excitation into a charge separation. The D1/D2 (PsbA/PsbD) reaction center heterodimer binds P680, the primary electron donor of PSII as well as several subsequent electron acceptors. D2 is needed for assembly of a stable PSII complex. This Stigeoclonium helveticum (Green alga) protein is Photosystem II D2 protein.